A 210-amino-acid polypeptide reads, in one-letter code: Ribosomal RNA small subunit methyltransferase G (210 aa).

S-adenosyl-L-methionine contacts are provided by residues Gly-76, Leu-81, 127-128, and Arg-142; that span reads VE.

The protein belongs to the methyltransferase superfamily. RNA methyltransferase RsmG family.

The protein localises to the cytoplasm. It carries out the reaction guanosine(527) in 16S rRNA + S-adenosyl-L-methionine = N(7)-methylguanosine(527) in 16S rRNA + S-adenosyl-L-homocysteine. Functionally, specifically methylates the N7 position of guanine in position 527 of 16S rRNA. In Vibrio atlanticus (strain LGP32) (Vibrio splendidus (strain Mel32)), this protein is Ribosomal RNA small subunit methyltransferase G.